The following is a 269-amino-acid chain: Indole-3-glycerol phosphate synthase 1 (269 aa).

This sequence belongs to the TrpC family.

The catalysed reaction is 1-(2-carboxyphenylamino)-1-deoxy-D-ribulose 5-phosphate + H(+) = (1S,2R)-1-C-(indol-3-yl)glycerol 3-phosphate + CO2 + H2O. It participates in amino-acid biosynthesis; L-tryptophan biosynthesis; L-tryptophan from chorismate: step 4/5. This Streptomyces coelicolor (strain ATCC BAA-471 / A3(2) / M145) protein is Indole-3-glycerol phosphate synthase 1 (trpC1).